A 374-amino-acid chain; its full sequence is Putative glutamate--cysteine ligase 2 (374 aa).

The protein belongs to the glutamate--cysteine ligase type 2 family. YbdK subfamily.

The catalysed reaction is L-cysteine + L-glutamate + ATP = gamma-L-glutamyl-L-cysteine + ADP + phosphate + H(+). Functionally, ATP-dependent carboxylate-amine ligase which exhibits weak glutamate--cysteine ligase activity. The sequence is that of Putative glutamate--cysteine ligase 2 from Acidovorax sp. (strain JS42).